Consider the following 164-residue polypeptide: Phosphopantetheine adenylyltransferase (164 aa).

Ser-10 is a substrate binding site. Residues 10-11 and His-18 contribute to the ATP site; that span reads SF. Residues Lys-42, Leu-74, and Arg-88 each contribute to the substrate site. Residues 89–91, Glu-99, and 124–130 contribute to the ATP site; these read GLR and YSFLSSS.

This sequence belongs to the bacterial CoaD family. In terms of assembly, homohexamer. Requires Mg(2+) as cofactor.

The protein localises to the cytoplasm. It carries out the reaction (R)-4'-phosphopantetheine + ATP + H(+) = 3'-dephospho-CoA + diphosphate. It participates in cofactor biosynthesis; coenzyme A biosynthesis; CoA from (R)-pantothenate: step 4/5. Its function is as follows. Reversibly transfers an adenylyl group from ATP to 4'-phosphopantetheine, yielding dephospho-CoA (dPCoA) and pyrophosphate. In Exiguobacterium sibiricum (strain DSM 17290 / CCUG 55495 / CIP 109462 / JCM 13490 / 255-15), this protein is Phosphopantetheine adenylyltransferase.